A 108-amino-acid polypeptide reads, in one-letter code: UPF0060 membrane protein YnfA (108 aa).

The Periplasmic portion of the chain corresponds to 1-5 (MIKTT). The helical transmembrane segment at 6-26 (LLFFATALCEIIGCFLPWLWL) threads the bilayer. Residues 27-30 (KRNA) lie on the Cytoplasmic side of the membrane. The helical transmembrane segment at 31 to 51 (SIWLLLPAGISLALFVWLLTL) threads the bilayer. The Periplasmic segment spans residues 52–60 (HPAASGRVY). A helical membrane pass occupies residues 61–81 (AAYGGVYVCTALIWLRVVDGV). The Cytoplasmic portion of the chain corresponds to 82-84 (KLS). A helical membrane pass occupies residues 85-105 (LYDWTGALIALCGMLIIVAGW). Over 106-108 (GRT) the chain is Periplasmic.

It belongs to the UPF0060 family.

Its subcellular location is the cell inner membrane. The chain is UPF0060 membrane protein YnfA from Escherichia coli (strain SMS-3-5 / SECEC).